A 783-amino-acid chain; its full sequence is Polyadenylate-binding protein, cytoplasmic and nuclear (783 aa).

Residues 16–65 (DLGNTSLGGGDNRAAPAINTNVAPGEYQTADPDTAGPTPSSAAPHPQSSA) form a disordered region. The span at 54–65 (PSSAAPHPQSSA) shows a compositional bias: low complexity. 4 RRM domains span residues 65–143 (ASLY…WSQR), 153–230 (GNVF…YHIP), 246–323 (TNIY…RAQK), and 349–471 (VNLY…LAQR). 3 disordered regions span residues 381 to 428 (MRDA…KGDR), 596 to 671 (AAAL…AAGG), and 752 to 783 (VKSQ…EEKA). Residues 396-406 (GKDKENKKEGE) are compositionally biased toward basic and acidic residues. Residues 407–416 (QAAEAEGEAE) show a composition bias toward acidic residues. Residues 417-428 (GAEKKTEKKGDR) show a composition bias toward basic and acidic residues. A compositionally biased stretch (gly residues) spans 601–614 (NGRGGPGGPGGRGM). The segment covering 630–641 (AGFPPNGRPQNG) has biased composition (low complexity). Positions 642–655 (NMGGRGGPGRGGNF) are enriched in gly residues. Residues 656–671 (AAGRGAPPAGPLAAGG) are compositionally biased toward low complexity. A PABC domain is found at 676-753 (SSLLQSQLTA…AMAVYDEYVK (78 aa)). Residues 770–783 (EAEKPKEEKAEEKA) are compositionally biased toward basic and acidic residues.

It belongs to the polyadenylate-binding protein type-1 family.

Its subcellular location is the cytoplasm. It localises to the nucleus. Its function is as follows. Binds the poly(A) tail of mRNA. Appears to be an important mediator of the multiple roles of the poly(A) tail in mRNA biogenesis, stability and translation. In the nucleus, involved in both mRNA cleavage and polyadenylation. Is also required for efficient mRNA export to the cytoplasm. Acts in concert with a poly(A)-specific nuclease (PAN) to affect poly(A) tail shortening, which may occur concomitantly with either nucleocytoplasmic mRNA transport or translational initiation. In the cytoplasm, stimulates translation initiation and regulates mRNA decay through translation termination-coupled poly(A) shortening, probably mediated by PAN. In Chaetomium globosum (strain ATCC 6205 / CBS 148.51 / DSM 1962 / NBRC 6347 / NRRL 1970) (Soil fungus), this protein is Polyadenylate-binding protein, cytoplasmic and nuclear (PAB1).